The sequence spans 240 residues: Fatty acid metabolism regulator protein (240 aa).

Residues 6–74 (KGPASFAEKY…HGKPTRVNNF (69 aa)) form the HTH gntR-type domain. The H-T-H motif DNA-binding region spans 34-53 (ERELSELIGVTRTTLREVLQ).

In terms of assembly, homodimer.

The protein resides in the cytoplasm. Functionally, multifunctional regulator of fatty acid metabolism. The sequence is that of Fatty acid metabolism regulator protein from Shewanella amazonensis (strain ATCC BAA-1098 / SB2B).